The sequence spans 494 residues: MPLREVTMTLDSLRFDNAWARLPEDFFTRVSPATWKNTRLLDISPRGCRALGLDPACFDDDAPARETLRQLMGGETVLPGMAPLAQKYTGHQFGVYNPALGDGRGLLMGEAQTADGYWDLHLKGAGQTPYSRFGDGRAVLRSSVREYLAGEAMAGLGVPTTLALALATNDEKVQRERVEPGATLLRLAPSHVRFGHFEWLYQSRRHDDMRRLVDHVIERHRPALAASESPAEALFGDVVARTARLIAAWQAYGFVHAVMNTDNMSILGLTLDYGPYAFMDAYDPRLVPNHTDANGRYAFDQQPGVGLWNLSVLGQSLTPLAEPDALRDRLTEYEPALQQEYARLMRARLGLESVVEGDAQLVQDWLTLLAEAGADYHRAFRALGEWAVDDGEWLRQEVPVEGLSAWLSRYHERLQEEERDAASRRDAMQAVNPLYVLRTHLAQQVIEAAEAGDEAPLVEFRRLLADPFTARPGMERWAAAPPPQASVICLSCSS.

Residues G101, G103, R104, K123, D135, G136, R186, and R193 each coordinate ATP. Catalysis depends on D262, which acts as the Proton acceptor. Mg(2+)-binding residues include N263 and D272. D272 is an ATP binding site.

This sequence belongs to the SELO family. Mg(2+) serves as cofactor. Mn(2+) is required as a cofactor.

It carries out the reaction L-seryl-[protein] + ATP = 3-O-(5'-adenylyl)-L-seryl-[protein] + diphosphate. It catalyses the reaction L-threonyl-[protein] + ATP = 3-O-(5'-adenylyl)-L-threonyl-[protein] + diphosphate. The enzyme catalyses L-tyrosyl-[protein] + ATP = O-(5'-adenylyl)-L-tyrosyl-[protein] + diphosphate. The catalysed reaction is L-histidyl-[protein] + UTP = N(tele)-(5'-uridylyl)-L-histidyl-[protein] + diphosphate. It carries out the reaction L-seryl-[protein] + UTP = O-(5'-uridylyl)-L-seryl-[protein] + diphosphate. It catalyses the reaction L-tyrosyl-[protein] + UTP = O-(5'-uridylyl)-L-tyrosyl-[protein] + diphosphate. Nucleotidyltransferase involved in the post-translational modification of proteins. It can catalyze the addition of adenosine monophosphate (AMP) or uridine monophosphate (UMP) to a protein, resulting in modifications known as AMPylation and UMPylation. This Chromohalobacter salexigens (strain ATCC BAA-138 / DSM 3043 / CIP 106854 / NCIMB 13768 / 1H11) protein is Protein nucleotidyltransferase YdiU.